A 40-amino-acid chain; its full sequence is Alpha-conotoxin-like Qc1.4b (40 aa).

A propeptide spanning residues 1–19 is cleaved from the precursor; sequence SDGRNTAANDKASDLMALR. Intrachain disulfides connect Cys-22/Cys-28 and Cys-23/Cys-36. Residues 24–26 are lacks the Ser-Xaa-Pro motif that is crucial for potent interaction with nAChR; it reads PNP. A Cysteine amide modification is found at Cys-36. Residues 37–40 constitute a propeptide that is removed on maturation; it reads GGGR.

Belongs to the conotoxin A superfamily. As to expression, expressed by the venom duct.

The protein resides in the secreted. Its function is as follows. Alpha-conotoxins act on postsynaptic membranes, they bind to the nicotinic acetylcholine receptors (nAChR) and thus inhibit them. Has possibly a distinct nAChR binding mode from other alpha-conotoxins, due to a different three residue motif (lacks the Ser-Xaa-Pro motif). The chain is Alpha-conotoxin-like Qc1.4b from Conus quercinus (Oak cone).